A 934-amino-acid polypeptide reads, in one-letter code: Bifunctional uridylyltransferase/uridylyl-removing enzyme (934 aa).

Residues 1–379 form a uridylyltransferase region; the sequence is MSAHDLKLEE…TFSRRKRKLS (379 aa). Positions 380–736 are uridylyl-removing; the sequence is DDGAFISENH…AKPHAFEAVT (357 aa). Residues 496-613 form the HD domain; that stretch reads VDEHLLRCIA…IDFADTVQTM (118 aa). 2 consecutive ACT domains span residues 737–818 and 848–931; these read EITV…DMLA and VIEV…RSPQ.

The protein belongs to the GlnD family. It depends on Mg(2+) as a cofactor.

The enzyme catalyses [protein-PII]-L-tyrosine + UTP = [protein-PII]-uridylyl-L-tyrosine + diphosphate. The catalysed reaction is [protein-PII]-uridylyl-L-tyrosine + H2O = [protein-PII]-L-tyrosine + UMP + H(+). Its activity is regulated as follows. Uridylyltransferase (UTase) activity is inhibited by glutamine, while glutamine activates uridylyl-removing (UR) activity. Its function is as follows. Modifies, by uridylylation and deuridylylation, the PII regulatory proteins (GlnB and homologs), in response to the nitrogen status of the cell that GlnD senses through the glutamine level. Under low glutamine levels, catalyzes the conversion of the PII proteins and UTP to PII-UMP and PPi, while under higher glutamine levels, GlnD hydrolyzes PII-UMP to PII and UMP (deuridylylation). Thus, controls uridylylation state and activity of the PII proteins, and plays an important role in the regulation of nitrogen assimilation and metabolism. This Brucella ovis (strain ATCC 25840 / 63/290 / NCTC 10512) protein is Bifunctional uridylyltransferase/uridylyl-removing enzyme.